Here is a 106-residue protein sequence, read N- to C-terminus: Integration host factor subunit beta (106 aa).

The tract at residues 57–106 (PARAGRNPRTGEHVPVEQKSVPFFKTGKEMRERLNRDGLDGATPPSPPAA) is disordered. Over residues 82-95 (TGKEMRERLNRDGL) the composition is skewed to basic and acidic residues.

The protein belongs to the bacterial histone-like protein family. Heterodimer of an alpha and a beta chain.

Its function is as follows. This protein is one of the two subunits of integration host factor, a specific DNA-binding protein that functions in genetic recombination as well as in transcriptional and translational control. This chain is Integration host factor subunit beta, found in Afipia carboxidovorans (strain ATCC 49405 / DSM 1227 / KCTC 32145 / OM5) (Oligotropha carboxidovorans).